Here is a 123-residue protein sequence, read N- to C-terminus: Class I hydrophobin pri2 (123 aa).

Positions 1–18 are cleaved as a signal peptide; it reads MVAIKSLAILALPVMAMA. 4 disulfides stabilise this stretch: Cys31–Cys102, Cys38–Cys96, Cys39–Cys84, and Cys103–Cys116. N-linked (GlcNAc...) asparagine glycosylation is found at Asn33 and Asn40.

The protein belongs to the fungal hydrophobin family. In terms of assembly, self-assembles to form functional amyloid fibrils called rodlets. Self-assembly into fibrillar rodlets occurs spontaneously at hydrophobic:hydrophilic interfaces and the rodlets further associate laterally to form amphipathic monolayers.

The protein localises to the secreted. Its subcellular location is the cell wall. In terms of biological role, aerial growth, conidiation, and dispersal of filamentous fungi in the environment rely upon a capability of their secreting small amphipathic proteins called hydrophobins (HPBs) with low sequence identity. Class I can self-assemble into an outermost layer of rodlet bundles on aerial cell surfaces, conferring cellular hydrophobicity that supports fungal growth, development and dispersal; whereas Class II form highly ordered films at water-air interfaces through intermolecular interactions but contribute nothing to the rodlet structure. The polypeptide is Class I hydrophobin pri2 (Cyclocybe aegerita (Black poplar mushroom)).